The following is a 286-amino-acid chain: MVAVIIKGNEVAEKKRAQLKEEVVKLKEQGIVPGLAVILVGEDPASRSYVKGKEKGCEQVGIYSELIEFPETITEERLLAEIDRLNGDDRINGILVQLPLPKHIEEKAIIERISPEKDVDGFHPISVGRMMTGQDTFLPCTPHGIVELVKETNLDISGKHVVVIGRSNIVGKPVGQLFLNENATVTYCHSKTQNMKELTKLADILIVAVGRPKMVTADYIKEGAVVIDVGVNRLETGKLCGDVDFDNVLDVASYITPVPKGVGPMTITMLLHNTVESAKRAGVVCK.

Residues 165-167, Ser190, and Val231 contribute to the NADP(+) site; that span reads GRS.

This sequence belongs to the tetrahydrofolate dehydrogenase/cyclohydrolase family. Homodimer.

It carries out the reaction (6R)-5,10-methylene-5,6,7,8-tetrahydrofolate + NADP(+) = (6R)-5,10-methenyltetrahydrofolate + NADPH. It catalyses the reaction (6R)-5,10-methenyltetrahydrofolate + H2O = (6R)-10-formyltetrahydrofolate + H(+). It participates in one-carbon metabolism; tetrahydrofolate interconversion. In terms of biological role, catalyzes the oxidation of 5,10-methylenetetrahydrofolate to 5,10-methenyltetrahydrofolate and then the hydrolysis of 5,10-methenyltetrahydrofolate to 10-formyltetrahydrofolate. The polypeptide is Bifunctional protein FolD (Bacillus anthracis (strain A0248)).